Here is a 219-residue protein sequence, read N- to C-terminus: Cytidylate kinase (219 aa).

Residue 21-29 coordinates ATP; it reads GPAASGKGT.

This sequence belongs to the cytidylate kinase family. Type 1 subfamily.

The protein resides in the cytoplasm. The catalysed reaction is CMP + ATP = CDP + ADP. It carries out the reaction dCMP + ATP = dCDP + ADP. This Rickettsia rickettsii (strain Iowa) protein is Cytidylate kinase.